Consider the following 163-residue polypeptide: MPDGDDDALTHTTADGDAQMVDVGSKPDTARRAVASGDLHLAESTIDAVRDDGIGKGNVLATARVGAIQAVKHTWETIPMCHQIPITNVDTTFDVRDDRVVLEVAVETTGKTGCEMEALEGVTTGLNVVWDMVKAAEKDADGQYPGTAIENVGVDTKEKHHPE.

Residues 1–23 (MPDGDDDALTHTTADGDAQMVDV) are disordered. Substrate contacts are provided by residues 80 to 82 (MCH) and 116 to 117 (ME). The active site involves Asp-131.

It belongs to the MoaC family. Homohexamer; trimer of dimers.

The catalysed reaction is (8S)-3',8-cyclo-7,8-dihydroguanosine 5'-triphosphate = cyclic pyranopterin phosphate + diphosphate. It functions in the pathway cofactor biosynthesis; molybdopterin biosynthesis. Catalyzes the conversion of (8S)-3',8-cyclo-7,8-dihydroguanosine 5'-triphosphate to cyclic pyranopterin monophosphate (cPMP). This chain is Probable cyclic pyranopterin monophosphate synthase, found in Halobacterium salinarum (strain ATCC 29341 / DSM 671 / R1).